Reading from the N-terminus, the 1284-residue chain is DNA topoisomerase 2, mitochondrial (1284 aa).

A mitochondrion-targeting transit peptide spans 1 to 35 (MSKLLNNNNHKNLTNYLKFGKGIINNLNNKSKQVG). Residues asparagine 183, asparagine 212, 240 to 242 (GSN), and 253 to 260 (GRNGFGAK) each bind ATP. The segment at 445 to 447 (KKK) is interaction with DNA. 478 to 480 (QSK) provides a ligand contact to ATP. Positions 560 to 677 (CTLIITEGDS…NLLKRGFLVE (118 aa)) constitute a Toprim domain. Glutamate 566, aspartate 646, and aspartate 648 together coordinate Mg(2+). One can recognise a Topo IIA-type catalytic domain in the interval 810-1232 (IPSLIDGLKP…DPKSLWTADL (423 aa)). Tyrosine 900 serves as the catalytic O-(5'-phospho-DNA)-tyrosine intermediate. Positions 1245–1284 (EFQKKPLKTSSSSSFDVSSSSESAKLSSTRKSKTDKIKSK) are disordered. The span at 1254–1271 (SSSSSFDVSSSSESAKLS) shows a compositional bias: low complexity.

The protein belongs to the type II topoisomerase family. In terms of assembly, homodimer. Mg(2+) serves as cofactor. It depends on Mn(2+) as a cofactor. The cofactor is Ca(2+).

The protein localises to the mitochondrion. It catalyses the reaction ATP-dependent breakage, passage and rejoining of double-stranded DNA.. Functionally, control of topological states of DNA by transient breakage and subsequent rejoining of DNA strands. Topoisomerase II makes double-strand breaks. The polypeptide is DNA topoisomerase 2, mitochondrial (top2mt) (Dictyostelium discoideum (Social amoeba)).